Reading from the N-terminus, the 635-residue chain is Threonine--tRNA ligase (635 aa).

A TGS domain is found at 1–61 (MVSIRLPDGS…DHDVALAIVT (61 aa)). The interval 242-533 (DHRKLGKQLD…LIEHHAGAMP (292 aa)) is catalytic. Positions 333, 384, and 510 each coordinate Zn(2+).

It belongs to the class-II aminoacyl-tRNA synthetase family. As to quaternary structure, homodimer. It depends on Zn(2+) as a cofactor.

It localises to the cytoplasm. It catalyses the reaction tRNA(Thr) + L-threonine + ATP = L-threonyl-tRNA(Thr) + AMP + diphosphate + H(+). In terms of biological role, catalyzes the attachment of threonine to tRNA(Thr) in a two-step reaction: L-threonine is first activated by ATP to form Thr-AMP and then transferred to the acceptor end of tRNA(Thr). Also edits incorrectly charged L-seryl-tRNA(Thr). This Paraburkholderia phytofirmans (strain DSM 17436 / LMG 22146 / PsJN) (Burkholderia phytofirmans) protein is Threonine--tRNA ligase.